Consider the following 493-residue polypeptide: Probable malate:quinone oxidoreductase (493 aa).

Belongs to the MQO family. The cofactor is FAD.

It catalyses the reaction (S)-malate + a quinone = a quinol + oxaloacetate. Its pathway is carbohydrate metabolism; tricarboxylic acid cycle; oxaloacetate from (S)-malate (quinone route): step 1/1. The polypeptide is Probable malate:quinone oxidoreductase (Mycobacterium marinum (strain ATCC BAA-535 / M)).